Reading from the N-terminus, the 83-residue chain is Small ribosomal subunit protein bS16 (83 aa).

It belongs to the bacterial ribosomal protein bS16 family.

The chain is Small ribosomal subunit protein bS16 from Polaromonas sp. (strain JS666 / ATCC BAA-500).